A 570-amino-acid polypeptide reads, in one-letter code: Sulfite reductase [NADPH] hemoprotein beta-component (570 aa).

[4Fe-4S] cluster-binding residues include cysteine 434, cysteine 440, cysteine 479, and cysteine 483. Residue cysteine 483 coordinates siroheme.

It belongs to the nitrite and sulfite reductase 4Fe-4S domain family. As to quaternary structure, alpha(8)-beta(8). The alpha component is a flavoprotein, the beta component is a hemoprotein. Siroheme serves as cofactor. It depends on [4Fe-4S] cluster as a cofactor.

The enzyme catalyses hydrogen sulfide + 3 NADP(+) + 3 H2O = sulfite + 3 NADPH + 4 H(+). The protein operates within sulfur metabolism; hydrogen sulfide biosynthesis; hydrogen sulfide from sulfite (NADPH route): step 1/1. In terms of biological role, component of the sulfite reductase complex that catalyzes the 6-electron reduction of sulfite to sulfide. This is one of several activities required for the biosynthesis of L-cysteine from sulfate. This is Sulfite reductase [NADPH] hemoprotein beta-component from Escherichia coli (strain ATCC 8739 / DSM 1576 / NBRC 3972 / NCIMB 8545 / WDCM 00012 / Crooks).